The sequence spans 382 residues: Mannitol-1-phosphate 5-dehydrogenase (382 aa).

Position 3–14 (3–14 (ALHFGAGNIGRG)) interacts with NAD(+).

Belongs to the mannitol dehydrogenase family.

The enzyme catalyses D-mannitol 1-phosphate + NAD(+) = beta-D-fructose 6-phosphate + NADH + H(+). The chain is Mannitol-1-phosphate 5-dehydrogenase (mtlD) from Klebsiella pneumoniae.